Consider the following 109-residue polypeptide: uncharacterized protein (109 aa).

A signal peptide spans 1–23 (MKNYNFILISLFIIFFIILNISS). The N-linked (GlcNAc...) asparagine glycan is linked to asparagine 27. Residues 45-109 (YQEYMENRTP…KKDQQNQQQN (65 aa)) form a disordered region. Positions 54–72 (PNEQQQQQQQQQNNNNPPQ) are enriched in low complexity. Residues 94-103 (KLKEKLKKDQ) show a composition bias toward basic and acidic residues.

It is found in the secreted. This is an uncharacterized protein from Dictyostelium discoideum (Social amoeba).